The sequence spans 106 residues: Molt-inhibiting hormone (106 aa).

Residues methionine 1–alanine 29 form the signal peptide. Cystine bridges form between cysteine 36–cysteine 73, cysteine 53–cysteine 69, and cysteine 56–cysteine 82. Alanine amide is present on alanine 104. The propeptide occupies glycine 105–arginine 106.

In terms of tissue distribution, sinus gland of the eyestalk.

It is found in the secreted. Inhibits Y-organs where molting hormone (ecdysteroid) is secreted. A molting cycle is initiated when MIH secretion diminishes or stops. The chain is Molt-inhibiting hormone from Faxonius limosus (Spinycheek crayfish).